Reading from the N-terminus, the 134-residue chain is MSLIRLGLALLLLLATVSQLLQPVQGRRKMCGEALIQALDVICVNGFTRRVRRSSASKDARVRDLIRKLQQPDEDIEQETETGRLKQKHTDADTEKGVPPAVGSGRKLRRHRRRIAHECCKEGCTYDDILDYCA.

Positions 1–26 are cleaved as a signal peptide; that stretch reads MSLIRLGLALLLLLATVSQLLQPVQG. 3 cysteine pairs are disulfide-bonded: C31–C120, C43–C133, and C119–C124. A propeptide spans 54 to 108 (connecting peptide); it reads SSASKDARVRDLIRKLQQPDEDIEQETETGRLKQKHTDADTEKGVPPAVGSGRKL. Residues 72 to 107 form a disordered region; the sequence is PDEDIEQETETGRLKQKHTDADTEKGVPPAVGSGRK. A compositionally biased stretch (basic and acidic residues) spans 81-96; sequence ETGRLKQKHTDADTEK.

Belongs to the insulin family. In terms of assembly, heterodimer of a B chain and an A chain linked by two disulfide bonds. In terms of tissue distribution, expressed at a high level in the embryonic mesoderm, with expression continuing after gastrulation and reducing from stage 12 onwards. Highly expressed in the embryonic anterior midgut rudiment and larval midgut.

Its subcellular location is the secreted. Possible ligand of InR/insulin-like receptor. The protein is Insulin-like peptide 4 of Drosophila melanogaster (Fruit fly).